Consider the following 81-residue polypeptide: Exodeoxyribonuclease 7 small subunit (81 aa).

Belongs to the XseB family. As to quaternary structure, heterooligomer composed of large and small subunits.

The protein resides in the cytoplasm. The enzyme catalyses Exonucleolytic cleavage in either 5'- to 3'- or 3'- to 5'-direction to yield nucleoside 5'-phosphates.. In terms of biological role, bidirectionally degrades single-stranded DNA into large acid-insoluble oligonucleotides, which are then degraded further into small acid-soluble oligonucleotides. The chain is Exodeoxyribonuclease 7 small subunit from Rhodopseudomonas palustris (strain BisA53).